The following is a 338-amino-acid chain: Fructose-1,6-bisphosphatase class 1 1 (338 aa).

Residues glutamate 91, aspartate 113, leucine 115, and aspartate 116 each coordinate Mg(2+). Residues 116-119 (DGSS), asparagine 208, and lysine 274 each bind substrate. Glutamate 280 is a Mg(2+) binding site.

The protein belongs to the FBPase class 1 family. In terms of assembly, homotetramer. The cofactor is Mg(2+).

The protein resides in the cytoplasm. It carries out the reaction beta-D-fructose 1,6-bisphosphate + H2O = beta-D-fructose 6-phosphate + phosphate. Its pathway is carbohydrate biosynthesis; gluconeogenesis. The chain is Fructose-1,6-bisphosphatase class 1 1 from Cupriavidus necator (strain ATCC 17699 / DSM 428 / KCTC 22496 / NCIMB 10442 / H16 / Stanier 337) (Ralstonia eutropha).